Reading from the N-terminus, the 508-residue chain is Phosphoglycerate kinase A (508 aa).

12 residues coordinate (2R)-3-phosphoglycerate: V32, D33, F34, N35, R48, S70, H71, G73, R74, R224, H260, and R261. Residues G306 and A307 each contribute to the ADP site. Position 306 (G306) interacts with CDP. AMP is bound by residues A307 and K308. A307 contributes to the ATP binding site. A307 serves as a coordination point for Mg(2+). (2R)-3-phosphoglycerate is bound at residue K308. CDP is bound at residue E311. Position 311 (E311) interacts with Mg(2+). ADP contacts are provided by K312 and G330. AMP is bound at residue K312. Residue K312 participates in ATP binding. G330 contacts CDP. AMP is bound by residues A331 and A403. Positions 331 and 403 each coordinate ATP. Residues A403 and N427 each contribute to the ADP site. Residues G428 and F433 each coordinate CDP. F433, E434, E466, and S467 together coordinate ADP. E434 contacts AMP. Positions 434, 466, and 467 each coordinate ATP. E466 is a binding site for Mg(2+).

It belongs to the phosphoglycerate kinase family. Monomer. The cofactor is Mg(2+).

The enzyme catalyses (2R)-3-phosphoglycerate + ATP = (2R)-3-phospho-glyceroyl phosphate + ADP. Its pathway is carbohydrate degradation; glycolysis; pyruvate from D-glyceraldehyde 3-phosphate: step 2/5. The protein is Phosphoglycerate kinase A of Trypanosoma brucei brucei.